Here is a 451-residue protein sequence, read N- to C-terminus: tRNA modification GTPase MnmE (451 aa).

(6S)-5-formyl-5,6,7,8-tetrahydrofolate-binding residues include Arg25, Glu82, and Lys121. The 158-residue stretch at Gly217 to Gly374 folds into the TrmE-type G domain. Asn227 lines the K(+) pocket. Residues Asn227–Ser232, Thr246–Thr252, and Asp271–Gly274 each bind GTP. Ser231 contacts Mg(2+). K(+)-binding residues include Thr246, Ile248, and Thr251. Residue Thr252 coordinates Mg(2+). Lys451 provides a ligand contact to (6S)-5-formyl-5,6,7,8-tetrahydrofolate.

Belongs to the TRAFAC class TrmE-Era-EngA-EngB-Septin-like GTPase superfamily. TrmE GTPase family. Homodimer. Heterotetramer of two MnmE and two MnmG subunits. K(+) serves as cofactor.

It is found in the cytoplasm. In terms of biological role, exhibits a very high intrinsic GTPase hydrolysis rate. Involved in the addition of a carboxymethylaminomethyl (cmnm) group at the wobble position (U34) of certain tRNAs, forming tRNA-cmnm(5)s(2)U34. The polypeptide is tRNA modification GTPase MnmE (Hydrogenovibrio crunogenus (strain DSM 25203 / XCL-2) (Thiomicrospira crunogena)).